Consider the following 170-residue polypeptide: MDFKQHIAIVPDYPKEGIVFKDITPLMNDGKAYKAATDAIVEYANKRDIDVVVGPEARGFIIGCPVSYALEVGFAPVRKLGKLPREVITVDYGKEYGTDVLTIHKDAIKPGQRVLITDDLLATGGTIEATIKLVEELGGVVAGIAFLVELTYLDGRKMLDGYDVLVLEKY.

The protein belongs to the purine/pyrimidine phosphoribosyltransferase family. Homodimer.

The protein resides in the cytoplasm. It catalyses the reaction AMP + diphosphate = 5-phospho-alpha-D-ribose 1-diphosphate + adenine. The protein operates within purine metabolism; AMP biosynthesis via salvage pathway; AMP from adenine: step 1/1. Catalyzes a salvage reaction resulting in the formation of AMP, that is energically less costly than de novo synthesis. The protein is Adenine phosphoribosyltransferase of Bacillus mycoides (strain KBAB4) (Bacillus weihenstephanensis).